The primary structure comprises 520 residues: Cryptochrome DASH (520 aa).

The Photolyase/cryptochrome alpha/beta domain maps to 5-141 (RTVICLLRND…RVQTFWGSTL (137 aa)). The segment at 479-504 (SRHVNNKSSGPSSSKGRKGSSYTARQ) is disordered.

Belongs to the DNA photolyase class-1 family. The cofactor is FAD. It depends on (6R)-5,10-methylene-5,6,7,8-tetrahydrofolate as a cofactor.

Its function is as follows. May have a photoreceptor function. Has weak cyclobutyl pyrimidine photolyase activity when expressed in E.coli and when tested in vitro. This Danio rerio (Zebrafish) protein is Cryptochrome DASH (cry-dash).